Here is a 404-residue protein sequence, read N- to C-terminus: Cysteine desulfurase IscS (404 aa).

Residues 75–76, Asn-155, Gln-183, and 203–205 each bind pyridoxal 5'-phosphate; these read AT and SAH. Lys-206 carries the post-translational modification N6-(pyridoxal phosphate)lysine. Residue Thr-243 participates in pyridoxal 5'-phosphate binding. Cys-328 acts as the Cysteine persulfide intermediate in catalysis. A [2Fe-2S] cluster-binding site is contributed by Cys-328.

It belongs to the class-V pyridoxal-phosphate-dependent aminotransferase family. NifS/IscS subfamily. As to quaternary structure, homodimer. Forms a heterotetramer with IscU, interacts with other sulfur acceptors. Pyridoxal 5'-phosphate serves as cofactor.

It localises to the cytoplasm. It catalyses the reaction (sulfur carrier)-H + L-cysteine = (sulfur carrier)-SH + L-alanine. It participates in cofactor biosynthesis; iron-sulfur cluster biosynthesis. In terms of biological role, master enzyme that delivers sulfur to a number of partners involved in Fe-S cluster assembly, tRNA modification or cofactor biosynthesis. Catalyzes the removal of elemental sulfur atoms from cysteine to produce alanine. Functions as a sulfur delivery protein for Fe-S cluster synthesis onto IscU, an Fe-S scaffold assembly protein, as well as other S acceptor proteins. The polypeptide is Cysteine desulfurase IscS (Tolumonas auensis (strain DSM 9187 / NBRC 110442 / TA 4)).